A 463-amino-acid polypeptide reads, in one-letter code: MEYRVEHDTMGEVKVPNDKYWGAQTERSFENFKIGCEKMPKVLIYAFANLKKSLALVNNKLGKLDDAKKNAIVQACDEIIAGKFDDNFPLAIWQTGSGTQSNMNMNEVIANRATEIMGGDFRKEKLVHPNDHVNMSQSSNDTFPTAMSIVAVEQVEKKLIPALDELIATFEKKVKEFDGIIKIGRTHLQDATPLTLAQEFSGYLSMLLHSKEQIIASLPTLRELAIGGTAVGTGLNAHPELSQKVSEELTQLIGTKFISSPNKFHALTSHDAINFTHGAMKGLAANLMKIANDIRWLASGPRCGLGELIIPENEPGSSIMPGKVNPTQCEAVTMVAVQVMGNDVAIGFAASQGNFELNVFKPVIIYNFLQSLDLLADSMHSFNIHCAVGIEPNRAKIDHNLHNSLMLVTALNPHIGYENAAKVAKNAHKKGISLKESTMELGLVSEEDFNKFVDPTKMIGPKA.

Substrate-binding positions include 97–99, 128–131, 138–140, and T186; these read SGT, HPND, and SSN. The active-site Proton donor/acceptor is the H187. S317 is an active-site residue. Substrate is bound by residues S318 and 323-325; that span reads KVN.

The protein belongs to the class-II fumarase/aspartase family. Fumarase subfamily. Homotetramer.

The protein resides in the cytoplasm. The catalysed reaction is (S)-malate = fumarate + H2O. The protein operates within carbohydrate metabolism; tricarboxylic acid cycle; (S)-malate from fumarate: step 1/1. In terms of biological role, involved in the TCA cycle. Catalyzes the stereospecific interconversion of fumarate to L-malate. The chain is Fumarate hydratase class II from Campylobacter jejuni subsp. jejuni serotype O:2 (strain ATCC 700819 / NCTC 11168).